The primary structure comprises 547 residues: Chaperonin GroEL (547 aa).

ATP contacts are provided by residues 30–33 (TLGP), K51, 87–91 (DGTTT), G415, 479–481 (NAA), and D495.

The protein belongs to the chaperonin (HSP60) family. Forms a cylinder of 14 subunits composed of two heptameric rings stacked back-to-back. Interacts with the co-chaperonin GroES.

The protein resides in the cytoplasm. The catalysed reaction is ATP + H2O + a folded polypeptide = ADP + phosphate + an unfolded polypeptide.. Functionally, together with its co-chaperonin GroES, plays an essential role in assisting protein folding. The GroEL-GroES system forms a nano-cage that allows encapsulation of the non-native substrate proteins and provides a physical environment optimized to promote and accelerate protein folding. This chain is Chaperonin GroEL, found in Polynucleobacter necessarius subsp. necessarius (strain STIR1).